The sequence spans 85 residues: Small integral membrane protein 35 (85 aa).

The chain crosses the membrane as a helical span at residues 7 to 27 (ISTLGMILGVGLSLLLVSILG).

It is found in the membrane. The protein is Small integral membrane protein 35 of Mus musculus (Mouse).